A 482-amino-acid polypeptide reads, in one-letter code: Histone deacetylase 1 (482 aa).

The interval 9 to 321 (RKVCYYYDGD…WTYETAVALD (313 aa)) is histone deacetylase. 1D-myo-inositol 1,4,5,6-tetrakisphosphate contacts are provided by G27 and K31. Position 74 is an N6-acetyllysine; alternate (K74). A Glycyl lysine isopeptide (Lys-Gly) (interchain with G-Cter in SUMO2); alternate cross-link involves residue K74. H141 is an active-site residue. Residues D176 and H178 each coordinate Zn(2+). K220 is modified (N6-acetyllysine). Position 261 is an S-nitrosocysteine (C261). Position 264 (D264) interacts with Zn(2+). Residue R270 coordinates 1D-myo-inositol 1,4,5,6-tetrakisphosphate. The residue at position 273 (C273) is an S-nitrosocysteine. Positions 390–400 (PEESGDEDEED) are enriched in acidic residues. The segment at 390-482 (PEESGDEDEE…KGVKEEVKLA (93 aa)) is disordered. A phosphoserine mark is found at S393, S406, S409, S421, and S423. Basic and acidic residues predominate over residues 401–416 (PDKRISICSSDKRIAC). Acidic residues predominate over residues 417 to 427 (EEEFSDSDEEG). Position 432 is an N6-methylated lysine; by EHMT2 (K432). A Glycyl lysine isopeptide (Lys-Gly) (interchain with G-Cter in SUMO2) cross-link involves residue K438. The segment covering 443 to 482 (VKTEDEKEKDPEEKKEVTEEEKTKEEKQEAKGVKEEVKLA) has biased composition (basic and acidic residues). K444 is covalently cross-linked (Glycyl lysine isopeptide (Lys-Gly) (interchain with G-Cter in SUMO2); alternate). Residue K444 forms a Glycyl lysine isopeptide (Lys-Gly) (interchain with G-Cter in SUMO); alternate linkage. Glycyl lysine isopeptide (Lys-Gly) (interchain with G-Cter in SUMO2) cross-links involve residues K456, K457, and K473. A Glycyl lysine isopeptide (Lys-Gly) (interchain with G-Cter in SUMO2); alternate cross-link involves residue K476. K476 is covalently cross-linked (Glycyl lysine isopeptide (Lys-Gly) (interchain with G-Cter in SUMO); alternate). K480 is covalently cross-linked (Glycyl lysine isopeptide (Lys-Gly) (interchain with G-Cter in SUMO2)).

It belongs to the histone deacetylase family. HD type 1 subfamily. As to quaternary structure, part of the core histone deacetylase (HDAC) complex composed of HDAC1, HDAC2, RBBP4 and RBBP7, the core complex associates with SIN3, SAP18 and SAP30 to form the SIN3 HDAC complex. Component of the nucleosome remodeling and deacetylase (NuRD) repressor complex, composed of core proteins MTA1, MTA2, MTA3, RBBP4, RBBP7, HDAC1, HDAC2, MBD2, MBD3, and peripherally associated proteins CDK2AP1, CDK2AP2, GATAD2A, GATAD2B, CHD3, CHD4 and CHD5. The exact stoichiometry of the NuRD complex is unknown, and some subunits such as MBD2 and MBD3, GATAD2A and GATAD2B, and CHD3, CHD4 and CHD5 define mutually exclusive NuRD complexes. Component of a BHC histone deacetylase complex that contains HDAC1, HDAC2, HMG20B/BRAF35, KDM1A, RCOR1/CoREST and PHF21A/BHC80. The BHC complex may also contain ZMYM2, ZNF217, ZMYM3, GSE1 and GTF2I. Component of a mSin3A corepressor complex that contains SIN3A, SAP130, SUDS3/SAP45, ARID4B/SAP180, HDAC1 and HDAC2. Found in a trimeric complex with APBB1 and TSHZ3; the interaction between HDAC1 and APBB1 is mediated by TSHZ3. Forms a complex comprising APPL1, RUVBL2, APPL2, CTNNB1 and HDAC2. Component of a RCOR/GFI/KDM1A/HDAC complex. Part of a complex composed of TRIM28, HDAC1, HDAC2 and EHMT2. Part of a complex containing at least CDYL, MIER1, MIER2, HDAC1 and HDAC2. The large PER complex involved in the histone deacetylation is composed of at least HDAC1, PER2, SFPQ and SIN3A. Associates with the 9-1-1 complex; interacts with HUS1. Found in a complex with DNMT3A and HDAC7. Found in a complex with YY1, SIN3A and GON4L. Identified in a histone deacetylase complex that contains DNTTIP1, HDAC1 and MIDEAS; this complex assembles into a tetramer that contains four copies of each protein chain. Found in a complex composed of at least SINHCAF, SIN3A, HDAC1, SAP30, RBBP4, OGT and TET1. Component of the SIN3B complex, which includes SIN3B, HDAC1, PHF12 and MORF4L1. Interacts with GFI1; the interaction is direct. Interacts directly with GFI1B. Interacts with TSHZ3 (via N-terminus); the interaction is direct. Interacts with APEX1; the interaction is not dependent on the acetylated status of APEX1. Interacts with BANP. Interacts with BAZ2A/TIP5. Interacts with BCL6. Interacts with BCOR. Interacts with BHLHE40/DEC1. Interacts with BRCC3; this interaction is enhanced in the presence of PWWP2B. Interacts with BRMS1. Interacts with BRMS1L. Interacts with C10orf90/FATS (via its N-terminal); the interaction prevents binding of HDAC1 to CDKN1A/p21 and facilitates the acetylation and stabilization of CDKN1A/p21. Interacts with CBFA2T3. Interacts with CCAR2. Interacts with CDK2AP1. Interacts with CHD3. Interacts with CHD4. Interacts with CHFR. Interacts with CIART. Interacts with CDKN1A/p21. Interacts with CDK5 complexed to CDK5R1 (p25). Interacts with CRY1. Interacts with DAXX. Interacts with DDIT3/CHOP. Interacts with DDX5. Interacts with DHX36; this interaction occurs in a RNA-dependent manner. Interacts with DNMT1. Interacts with DNTTIP1. Interacts with E4F1. Interacts with EP300. Interacts with ERCC6. Interacts with GATAD2A. Interacts with HCFC1. Interacts with HDAC9. Interacts with HUS1. Interacts with INSM1. Interacts with KDM4A. Interacts with KDM5A; this interaction impairs histone deacetylation. Interacts with KDM5B. Interacts with KLF1. Interacts with MBD3L2. Interacts with MIER1. Interacts with NFE4. Interacts with NR4A2/NURR1. Interacts with NR1D2 (via C-terminus). Interacts with NRIP1. Interacts with NSD2. Interacts with PACS2. Interacts with PHB2. Interacts with PPHLN1. Interacts with PRDM6. Interacts with PRDM16. Interacts with PWWP2A in a MTA1-dependent manner. Interacts with PWWP2B. Interacts with RB1. Interacts with RERE. Interacts with SANBR (via the BTB domain). Interacts with SAMSN1. Interacts with SAP30L. Interacts with SETDB1. Interacts with SIN3A. Interacts with SMAD3. Interacts with SMAD4; positively regulated by ZBTB7A. Interacts with SMARCAD1. Interacts with SMARCA4/BRG1. Interacts with SMYD2. Interacts with SMYD4 (via MYND-type zinc finger). Interacts with SP1; the interaction deacetylates SP1 and regulates its transcriptional activity. Interacts with SP3; the interaction deacetylates SP3 and regulates its transcriptional activity. In vitro, C(18) ceramides increase this interaction and the subsequent SP3 deacetylation and SP3-mediated repression of the TERT promoter. Interacts with SPEN/MINT. Interacts with SPHK2. Interacts with SUV39H1. Interacts with TGIF. Interacts with TGIF2. Interacts with TRAF6. Interacts with TRIM28; the interaction recruits HDAC1 to E2F1 and inhibits its acetylation. Interacts with TSC22D3 isoform 1; this interaction affects HDAC1 activity on MYOG promoter and thus inhibits MYOD1 transcriptional activity. Interacts with UHRF1. Interacts with UHRF2. Interacts with ZBTB7A. Interacts with ZMYND8. Interacts with ZMYND15. Interacts with ZNF431. Interacts with ZNF516; this interaction is enhanced in the presence of PWWP2B. Interacts with ZNF541. Interacts with ZNF638. Interacts with ZNHIT1. Interacts with the non-histone region of MACROH2A1. Identified in a complex with HDAC2, KCTD19, DNTTIP1 and ZNF541. Interacts with MSX3. Interacts with VRK1. Zn(2+) serves as cofactor. Post-translationally, sumoylated on Lys-444 and Lys-476; which promotes enzymatic activity. Desumoylated by SENP1. Phosphorylation on Ser-421 and Ser-423 promotes enzymatic activity and interactions with NuRD and SIN3 complexes. Phosphorylated by CDK5. In terms of processing, ubiquitinated by CHFR and KCTD11, leading to its degradation by the proteasome.

The protein localises to the nucleus. The catalysed reaction is N(6)-acetyl-L-lysyl-[histone] + H2O = L-lysyl-[histone] + acetate. It catalyses the reaction N(6)-acetyl-L-lysyl-[protein] + H2O = L-lysyl-[protein] + acetate. It carries out the reaction N(6)-(2E)-butenoyl-L-lysyl-[protein] + H2O = (2E)-2-butenoate + L-lysyl-[protein]. The enzyme catalyses N(6)-[(S)-lactoyl]-L-lysyl-[protein] + H2O = (S)-lactate + L-lysyl-[protein]. With respect to regulation, inositol tetraphosphate (1D-myo-inositol 1,4,5,6-tetrakisphosphate) may act as an intermolecular glue between HDAC1 and N-Cor repressor complex components. Histone deacetylase that catalyzes the deacetylation of lysine residues on the N-terminal part of the core histones (H2A, H2B, H3 and H4). Histone deacetylation gives a tag for epigenetic repression and plays an important role in transcriptional regulation, cell cycle progression and developmental events. Histone deacetylases act via the formation of large multiprotein complexes. Acts as a component of the histone deacetylase NuRD complex which participates in the remodeling of chromatin. As part of the SIN3B complex is recruited downstream of the constitutively active genes transcriptional start sites through interaction with histones and mitigates histone acetylation and RNA polymerase II progression within transcribed regions contributing to the regulation of transcription. Also functions as a deacetylase for non-histone targets, such as NR1D2, RELA, SP1, SP3, STAT3 and TSHZ3. Deacetylates SP proteins, SP1 and SP3, and regulates their function. Component of the BRG1-RB1-HDAC1 complex, which negatively regulates the CREST-mediated transcription in resting neurons. Upon calcium stimulation, HDAC1 is released from the complex and CREBBP is recruited, which facilitates transcriptional activation. Deacetylates TSHZ3 and regulates its transcriptional repressor activity. Deacetylates 'Lys-310' in RELA and thereby inhibits the transcriptional activity of NF-kappa-B. Deacetylates NR1D2 and abrogates the effect of KAT5-mediated relieving of NR1D2 transcription repression activity. Component of a RCOR/GFI/KDM1A/HDAC complex that suppresses, via histone deacetylase (HDAC) recruitment, a number of genes implicated in multilineage blood cell development. Involved in CIART-mediated transcriptional repression of the circadian transcriptional activator: CLOCK-BMAL1 heterodimer. Required for the transcriptional repression of circadian target genes, such as PER1, mediated by the large PER complex or CRY1 through histone deacetylation. In addition to protein deacetylase activity, also has protein-lysine deacylase activity: acts as a protein decrotonylase and delactylase by mediating decrotonylation ((2E)-butenoyl) and delactylation (lactoyl) of histones, respectively. The sequence is that of Histone deacetylase 1 (HDAC1) from Bos taurus (Bovine).